The primary structure comprises 570 residues: Protein FAM227A (570 aa).

Over residues 87–99 the composition is skewed to basic and acidic residues; that stretch reads LREKTRSSPEDKV. 3 disordered regions span residues 87–112, 336–374, and 519–570; these read LREKTRSSPEDKVKRQRKSQYSCKGS, PAQSRKFYHPQSSSANSPSEKTSSAKQNSEKSLRMQNTA, and KAAD…TSKP. The residue at position 343 (Y343) is a Phosphotyrosine. The segment covering 345-362 has biased composition (polar residues); the sequence is PQSSSANSPSEKTSSAKQ. A phosphoserine mark is found at S348 and S349. 2 stretches are compositionally biased toward basic and acidic residues: residues 363-374 and 540-562; these read NSEKSLRMQNTA and SPDKKTKEGKGGEGKRRETEVEH.

The protein belongs to the FAM227 family.

In Homo sapiens (Human), this protein is Protein FAM227A (FAM227A).